Consider the following 387-residue polypeptide: Formate-dependent phosphoribosylglycinamide formyltransferase (387 aa).

Residues 15-16 (EL) and E75 contribute to the N(1)-(5-phospho-beta-D-ribosyl)glycinamide site. Residues R106, K147, 152 to 157 (SSGKGQ), 187 to 190 (EEFI), and E195 contribute to the ATP site. Positions 111–301 (DLASNELNIR…EFELHLRAVL (191 aa)) constitute an ATP-grasp domain. Residues E260 and E272 each contribute to the Mg(2+) site. N(1)-(5-phospho-beta-D-ribosyl)glycinamide-binding positions include D279, K349, and 356–357 (RR).

This sequence belongs to the PurK/PurT family. As to quaternary structure, homodimer.

It carries out the reaction N(1)-(5-phospho-beta-D-ribosyl)glycinamide + formate + ATP = N(2)-formyl-N(1)-(5-phospho-beta-D-ribosyl)glycinamide + ADP + phosphate + H(+). Its pathway is purine metabolism; IMP biosynthesis via de novo pathway; N(2)-formyl-N(1)-(5-phospho-D-ribosyl)glycinamide from N(1)-(5-phospho-D-ribosyl)glycinamide (formate route): step 1/1. In terms of biological role, involved in the de novo purine biosynthesis. Catalyzes the transfer of formate to 5-phospho-ribosyl-glycinamide (GAR), producing 5-phospho-ribosyl-N-formylglycinamide (FGAR). Formate is provided by PurU via hydrolysis of 10-formyl-tetrahydrofolate. The sequence is that of Formate-dependent phosphoribosylglycinamide formyltransferase from Prochlorococcus marinus (strain NATL1A).